Here is a 96-residue protein sequence, read N- to C-terminus: DNA-directed RNA polymerase subunit Rpo11 (96 aa).

Belongs to the archaeal Rpo11/eukaryotic RPB11/RPC19 RNA polymerase subunit family. As to quaternary structure, part of the RNA polymerase complex.

It localises to the cytoplasm. It carries out the reaction RNA(n) + a ribonucleoside 5'-triphosphate = RNA(n+1) + diphosphate. Its function is as follows. DNA-dependent RNA polymerase (RNAP) catalyzes the transcription of DNA into RNA using the four ribonucleoside triphosphates as substrates. The protein is DNA-directed RNA polymerase subunit Rpo11 of Methanococcus maripaludis (strain DSM 14266 / JCM 13030 / NBRC 101832 / S2 / LL).